A 380-amino-acid chain; its full sequence is Cytochrome b (380 aa).

4 helical membrane passes run 33–53, 77–98, 113–133, and 178–198; these read FGSL…FLAM, WLIR…YLHV, WNIG…GYVL, and FFAF…IHLL. Positions 83 and 97 each coordinate heme b. Residues histidine 182 and histidine 196 each contribute to the heme b site. Histidine 201 is an a ubiquinone binding site. The next 4 membrane-spanning stretches (helical) occupy residues 226–246, 288–308, 320–340, and 347–367; these read YKDL…ALFS, LGGV…PMLH, LSQI…WIGG, and FVLI…IALP.

This sequence belongs to the cytochrome b family. The cytochrome bc1 complex contains 3 respiratory subunits (MT-CYB, CYC1 and UQCRFS1), 2 core proteins (UQCRC1 and UQCRC2) and probably 6 low-molecular weight proteins. Requires heme b as cofactor.

The protein localises to the mitochondrion inner membrane. Component of the ubiquinol-cytochrome c reductase complex (complex III or cytochrome b-c1 complex) that is part of the mitochondrial respiratory chain. The b-c1 complex mediates electron transfer from ubiquinol to cytochrome c. Contributes to the generation of a proton gradient across the mitochondrial membrane that is then used for ATP synthesis. This is Cytochrome b (mt-cyb) from Acipenser persicus (Persian sturgeon).